The primary structure comprises 565 residues: MKSPAPSRPQKMALIPACIFLCFAALSVQAEETSVTPQPPDILLGPLFNDVQNAKLFPDQKTFADAVPNSDPLMILADYRMQQNQSGFDLRHFVNVNFTLPKEGEKYVPPEGQSLREHIDGLWPVLTRSTENTEKWDSLLPLPKPYVVPGGRFREVYYWDSYFTMLGLAESGHWDKVADMVANFAHEIDNYGHIPNGNRSYYLSRSQPPFFALMVELLAQHEGDAALKQYLPQMQKEYAYWMDGVENLQAGQQEKRVVKLQDGTLLNRYWDDRDTPRPESWVEDIATAKSNPNRPATEIYRDLRSAAASGWDFSSRWMDNPQQLNTLRTTSIVPVDLNSLMFKMEKILARASKAIGDNAMANQYETLANARQKGIEKYLWNDQQGWYADYDLKSHKVRNQLTAAALFPLYVNAAAKDRASKMATATKTHLLQPGGLNTTSVKSGQQWDAPNGWAPLQWVATEGLQNYGQKEVAMDISWHFLTNVQHTYDREKKLVEKYDVSTTGTGGGGGEYPLQDGFGWTNGVTLKMLDLICPKEQPCDNVPATRPLSESTTQPLKQKEAEPTP.

The N-terminal stretch at 1–30 is a signal peptide; the sequence is MKSPAPSRPQKMALIPACIFLCFAALSVQA. Substrate is bound by residues arginine 152, 159-160, asparagine 196, 205-207, 277-279, and glycine 310; these read WD, RSQ, and RPE. Active-site proton donor/acceptor residues include aspartate 312 and glutamate 496. A substrate-binding site is contributed by glutamate 511. The tract at residues 539 to 565 is disordered; sequence CDNVPATRPLSESTTQPLKQKEAEPTP.

The protein belongs to the glycosyl hydrolase 37 family. In terms of assembly, monomer.

The protein resides in the periplasm. It carries out the reaction alpha,alpha-trehalose + H2O = alpha-D-glucose + beta-D-glucose. Functionally, provides the cells with the ability to utilize trehalose at high osmolarity by splitting it into glucose molecules that can subsequently be taken up by the phosphotransferase-mediated uptake system. The protein is Periplasmic trehalase of Escherichia coli O45:K1 (strain S88 / ExPEC).